A 187-amino-acid polypeptide reads, in one-letter code: GTP cyclohydrolase 1 (187 aa).

Positions 76, 79, and 148 each coordinate Zn(2+).

The protein belongs to the GTP cyclohydrolase I family. Toroid-shaped homodecamer, composed of two pentamers of five dimers.

It catalyses the reaction GTP + H2O = 7,8-dihydroneopterin 3'-triphosphate + formate + H(+). It participates in cofactor biosynthesis; 7,8-dihydroneopterin triphosphate biosynthesis; 7,8-dihydroneopterin triphosphate from GTP: step 1/1. The sequence is that of GTP cyclohydrolase 1 from Streptococcus thermophilus (strain CNRZ 1066).